We begin with the raw amino-acid sequence, 102 residues long: Protein translation factor SUI1 homolog (102 aa).

The protein belongs to the SUI1 family.

The protein is Protein translation factor SUI1 homolog of Nitrosopumilus maritimus (strain SCM1).